Consider the following 348-residue polypeptide: MEMSFRWYGEDDPVTLENIGQIPTMKGIVTAIYDVPVGEVWSRERIQQLKEKVEAAGLKISVIESVPVHEDIKLGRPTRDLLIDNYIQTVKNLAAEGIDTICYNFMPVFDWTRTDLAYQYPDGSTALIFDETVSKKMDPVNGELSLPGWDASYSKEEMKAIMDAYAEIDEEKLWENLTYFIKRIIPEAEAVGVKMAIHPDDPPYSIFGLPRIITGLEAIERFVKLYDSKSNGITLCVGSYASDPQNDVLEISRRAFELDRVNFVHARNIKLGDGKSFKESAHPSEYGSIDMYEVIKLCHEFGFEGAIRPDHGRMIWGETGRPGYGLYDRALGATYVSGLYEAVIKGSK.

It belongs to the mannonate dehydratase family. The cofactor is Fe(2+). Mn(2+) is required as a cofactor.

It catalyses the reaction D-mannonate = 2-dehydro-3-deoxy-D-gluconate + H2O. The protein operates within carbohydrate metabolism; pentose and glucuronate interconversion. In terms of biological role, catalyzes the dehydration of D-mannonate. The protein is Mannonate dehydratase of Streptococcus agalactiae serotype V (strain ATCC BAA-611 / 2603 V/R).